Here is a 367-residue protein sequence, read N- to C-terminus: Protein RecA (367 aa).

Residues methionine 1–glutamate 14 show a composition bias toward polar residues. Positions methionine 1–glutamate 24 are disordered. The span at serine 15–glutamate 24 shows a compositional bias: basic and acidic residues. Position 84 to 91 (glycine 84 to threonine 91) interacts with ATP. The tract at residues glycine 348–alanine 367 is disordered. The span at serine 349–alanine 367 shows a compositional bias: polar residues.

Belongs to the RecA family.

It is found in the cytoplasm. Its function is as follows. Can catalyze the hydrolysis of ATP in the presence of single-stranded DNA, the ATP-dependent uptake of single-stranded DNA by duplex DNA, and the ATP-dependent hybridization of homologous single-stranded DNAs. It interacts with LexA causing its activation and leading to its autocatalytic cleavage. This chain is Protein RecA, found in Prochlorococcus marinus (strain MIT 9211).